Consider the following 253-residue polypeptide: Negative modulator of initiation of replication (253 aa).

The segment at Ser-66–Glu-112 is disordered. Residues Ala-154–Val-155 are interaction with DNA.

It belongs to the SeqA family. As to quaternary structure, homodimer. Polymerizes to form helical filaments.

The protein resides in the cytoplasm. Functionally, negative regulator of replication initiation, which contributes to regulation of DNA replication and ensures that replication initiation occurs exactly once per chromosome per cell cycle. Binds to pairs of hemimethylated GATC sequences in the oriC region, thus preventing assembly of replication proteins and re-initiation at newly replicated origins. Repression is relieved when the region becomes fully methylated. This chain is Negative modulator of initiation of replication, found in Shewanella denitrificans (strain OS217 / ATCC BAA-1090 / DSM 15013).